Here is a 189-residue protein sequence, read N- to C-terminus: MKSSSHLKQEALNYRFNSNVPLKLYLTTCISIVEEAQNSARCNNMERAYLLYIRYLDLCLNRLVHHSEVNTSVESLYKREYFQLLKLEVPAIMKITEELKIKIDARYKSLANNVATSTYVRSPAVMTTNPSDEINLPSSFDEQKFNQSISWFNHSSKHFSAQSDSNNEYPELPELNATSTSVTYTMPAL.

This sequence belongs to the RFU1 family.

Its subcellular location is the endosome. Inhibitor of the DOA4 deubiquitinase involved in the regulation of protein degradation by the proteasome and maintenance of a normal level of free ubiquitin. In Kluyveromyces lactis (strain ATCC 8585 / CBS 2359 / DSM 70799 / NBRC 1267 / NRRL Y-1140 / WM37) (Yeast), this protein is Regulator of free ubiquitin chains 1 (RFU1).